We begin with the raw amino-acid sequence, 272 residues long: B3 domain-containing protein Os10g0323000 (272 aa).

Residues 39–132 (RYGENRKHGQ…TLDLLILDKH (94 aa)) constitute a DNA-binding region (TF-B3 1). The segment at 139 to 171 (PPSKRDLKLKSKRSTHQDSKGHPSNTDPGPSRI) is disordered. The span at 141-159 (SKRDLKLKSKRSTHQDSKG) shows a compositional bias: basic and acidic residues. Positions 180 to 272 (ESSANTQLLV…THLGVIVDIF (93 aa)) form a DNA-binding region, TF-B3 2.

The protein resides in the nucleus. The chain is B3 domain-containing protein Os10g0323000 from Oryza sativa subsp. japonica (Rice).